Reading from the N-terminus, the 476-residue chain is Protein DETOXIFICATION 3 (476 aa).

The next 12 helical transmembrane spans lie at 35 to 55 (AAPM…SVMV), 66 to 86 (GVAL…FGLA), 117 to 137 (IPIC…LISL), 146 to 166 (VAGS…FFIP), 185 to 205 (LTTL…FGLG), 208 to 228 (GAAM…SCYV), 260 to 280 (AAMV…SGLL), 289 to 309 (VLSI…GVAA), 331 to 351 (VLAG…LLFT), 370 to 390 (VANL…TAVL), 402 to 422 (IGAL…GVYL), and 433 to 453 (LWCG…FVTA).

The protein belongs to the multi antimicrobial extrusion (MATE) (TC 2.A.66.1) family.

Its subcellular location is the membrane. This chain is Protein DETOXIFICATION 3, found in Arabidopsis thaliana (Mouse-ear cress).